A 170-amino-acid chain; its full sequence is Protein ripply3 (170 aa).

Positions 40–43 match the WRPW motif motif; sequence WRPW. Residues 79–114 are ripply homology domain; it reads HPVRLYMPKSKTSEYLQHMGKKVLANFPVQATIHFY. The segment covering 143-152 has biased composition (polar residues); it reads VNSSRGSGDN. The interval 143–170 is disordered; sequence VNSSRGSGDNYSVPGGPKRNISSHTGSA.

It belongs to the ripply family. Interacts with tbx1 and tle4/grg4.

Its subcellular location is the nucleus. Functionally, acts as a transcriptional corepressor. Negative regulator of the transcriptional activity of tbx1 that plays a key role in pharyngeal development. Plays a role in the formation of the anteroposterior (AP) axis during embryonic development; required to establish the posterolateral border of the pre-placodal ectoderm (PPE) acting downstream of the retinoic acid receptor (RAR) signaling. This Xenopus tropicalis (Western clawed frog) protein is Protein ripply3.